Here is a 400-residue protein sequence, read N- to C-terminus: Probable glucan endo-1,6-beta-glucosidase B (400 aa).

A signal peptide spans Met-1–Ala-17. Asn-30 is a glycosylation site (N-linked (GlcNAc...) asparagine). Glu-219 functions as the Proton donor in the catalytic mechanism. Asn-272 is a glycosylation site (N-linked (GlcNAc...) asparagine). Residue Glu-320 is the Nucleophile of the active site.

The protein belongs to the glycosyl hydrolase 5 (cellulase A) family.

The protein resides in the secreted. The catalysed reaction is Random hydrolysis of (1-&gt;6)-linkages in (1-&gt;6)-beta-D-glucans.. Its function is as follows. Beta-glucanases participate in the metabolism of beta-glucan, the main structural component of the cell wall. Acts on lutean, pustulan and 1,6-oligo-beta-D-glucosides. The polypeptide is Probable glucan endo-1,6-beta-glucosidase B (exgB) (Neosartorya fischeri (strain ATCC 1020 / DSM 3700 / CBS 544.65 / FGSC A1164 / JCM 1740 / NRRL 181 / WB 181) (Aspergillus fischerianus)).